Consider the following 302-residue polypeptide: Cell division protein FtsQ (302 aa).

The segment at 1 to 41 is disordered; it reads MPAVVRGGPPKPRRPRAEAPASPSKGKPAPRKAQPAAKLHA. Residues 1–50 are Cytoplasmic-facing; the sequence is MPAVVRGGPPKPRRPRAEAPASPSKGKPAPRKAQPAAKLHAARGVGLSPT. Positions 18-38 are enriched in low complexity; the sequence is EAPASPSKGKPAPRKAQPAAK. A helical membrane pass occupies residues 51 to 71; it reads VALSVAGAALGLGLVVMLATG. Residues 72 to 302 are Periplasmic-facing; it reads HRAERLGASM…LPGQPAADGA (231 aa). The 69-residue stretch at 94-162 folds into the POTRA domain; that stretch reads FRLKTVHIRG…DTVLIAVEER (69 aa).

Belongs to the FtsQ/DivIB family. FtsQ subfamily.

It is found in the cell inner membrane. In terms of biological role, essential cell division protein. This is Cell division protein FtsQ from Caulobacter vibrioides (strain ATCC 19089 / CIP 103742 / CB 15) (Caulobacter crescentus).